We begin with the raw amino-acid sequence, 232 residues long: Platelet-activating factor acetylhydrolase IB subunit alpha1 (232 aa).

The interval 1–20 (MSGEGENPASKPTPVQDVQG) is disordered. Position 2 is an N-acetylserine (serine 2). A Phosphoserine modification is found at serine 2. Active-site residues include serine 48, aspartate 193, and histidine 196.

The protein belongs to the 'GDSL' lipolytic enzyme family. Platelet-activating factor acetylhydrolase IB beta/gamma subunits subfamily. In terms of assembly, forms a catalytic dimer which is either homodimer (alpha1/alpha1 homodimer) or heterodimer with PAFAH1B2 (alpha1/alpha2 heterodimer). Component of the cytosolic (PAF-AH (I)) heterotetrameric enzyme, which is composed of PAFAH1B1 (beta), PAFAH1B2 (alpha2) and PAFAH1B3 (alpha1) subunits. The catalytic activity of the enzyme resides in the alpha1 (PAFAH1B3) and alpha2 (PAFAH1B2) subunits, whereas the beta subunit (PAFAH1B1) has regulatory activity. Trimer formation is not essential for the catalytic activity. Interacts with VLDLR; this interaction may modulate the Reelin pathway. Expressed in brain, spleen, lung, liver, kidney and testis. Not expressed in heart and skeletal muscle. Expressed in fetal brain as heterodimer. Not expressed in adult tissues. Expressed exclusively in granule cells.

It is found in the cytoplasm. The enzyme catalyses a 1-O-alkyl-2-acetyl-sn-glycero-3-phosphocholine + H2O = a 1-O-alkyl-sn-glycero-3-phosphocholine + acetate + H(+). The catalysed reaction is 1-O-hexadecyl-2-acetyl-sn-glycero-3-phosphocholine + H2O = 1-O-hexadecyl-sn-glycero-3-phosphocholine + acetate + H(+). It catalyses the reaction 1-O-hexadecyl-2-acetyl-sn-glycero-3-phosphate + H2O = 1-O-hexadecyl-sn-glycero-3-phosphate + acetate + H(+). Beta subunit (PAFAH1B1) inhibits the acetylhydrolase activity of the alpha1/alpha1 catalytic homodimer. Functionally, alpha1 catalytic subunit of the cytosolic type I platelet-activating factor (PAF) acetylhydrolase (PAF-AH (I)) heterotetrameric enzyme that catalyzes the hydrolyze of the acetyl group at the sn-2 position of PAF and its analogs and modulates the action of PAF. The activity and substrate specificity of PAF-AH (I) are affected by its subunit composition. Both alpha1/alpha1 homodimer (PAFAH1B3/PAFAH1B3 homodimer) and alpha1/alpha2 heterodimer(PAFAH1B3/PAFAH1B2 heterodimer) hydrolyze 1-O-alkyl-2-acetyl-sn-glycero-3-phosphoric acid (AAGPA) more efficiently than PAF, but they have little hydrolytic activity towards 1-O-alkyl-2-acetyl-sn-glycero-3-phosphorylethanolamine (AAGPE). Plays an important role during the development of brain. The polypeptide is Platelet-activating factor acetylhydrolase IB subunit alpha1 (Rattus norvegicus (Rat)).